The sequence spans 255 residues: 4-hydroxy-tetrahydrodipicolinate reductase (255 aa).

NAD(+) contacts are provided by residues 9 to 14 (GYRGKM), 89 to 91 (GTT), and 115 to 118 (APNF). His145 functions as the Proton donor/acceptor in the catalytic mechanism. His146 serves as a coordination point for (S)-2,3,4,5-tetrahydrodipicolinate. Lys149 acts as the Proton donor in catalysis. 155 to 156 (GT) is a (S)-2,3,4,5-tetrahydrodipicolinate binding site.

Belongs to the DapB family.

The protein resides in the cytoplasm. It catalyses the reaction (S)-2,3,4,5-tetrahydrodipicolinate + NAD(+) + H2O = (2S,4S)-4-hydroxy-2,3,4,5-tetrahydrodipicolinate + NADH + H(+). The enzyme catalyses (S)-2,3,4,5-tetrahydrodipicolinate + NADP(+) + H2O = (2S,4S)-4-hydroxy-2,3,4,5-tetrahydrodipicolinate + NADPH + H(+). It participates in amino-acid biosynthesis; L-lysine biosynthesis via DAP pathway; (S)-tetrahydrodipicolinate from L-aspartate: step 4/4. In terms of biological role, catalyzes the conversion of 4-hydroxy-tetrahydrodipicolinate (HTPA) to tetrahydrodipicolinate. In Streptococcus uberis (strain ATCC BAA-854 / 0140J), this protein is 4-hydroxy-tetrahydrodipicolinate reductase.